Consider the following 702-residue polypeptide: DnaJ homolog subfamily C member 14 (702 aa).

2 disordered regions span residues M1–G148 and D165–Q229. Pro residues predominate over residues H75–P84. The span at E88–V103 shows a compositional bias: acidic residues. Positions T113–G133 are enriched in polar residues. The segment covering D165–E175 has biased composition (acidic residues). Positions P192–F201 are enriched in basic residues. Basic and acidic residues predominate over residues P202 to S217. Positions P218 to R227 are enriched in basic residues. A run of 3 helical transmembrane segments spans residues A250 to G270, G300 to F320, and L326 to W346. Positions N443–R507 constitute a J domain. Residues M658–R702 form a disordered region. Low complexity predominate over residues P659–A676. The span at P690 to R702 shows a compositional bias: basic residues.

In terms of assembly, interacts with the FxxxFxxxF motif of DRD1 via its C-terminal domain. As to expression, highly expressed in pancreas and selectively expressed in brain, lung, liver, skeletal muscle and kidney.

The protein localises to the endoplasmic reticulum membrane. Regulates the export of target proteins, such as DRD1, from the endoplasmic reticulum to the cell surface. This chain is DnaJ homolog subfamily C member 14 (DNAJC14), found in Homo sapiens (Human).